The chain runs to 73 residues: Homeodomain-only protein (73 aa).

The homeobox; degenerate DNA-binding region spans 3–62; that stretch reads AEPANGPTEDQVEILEYNFNKVNRHPDPTTLCLIAAEAGLSEEETQKWFKQRLAQWRRSE.

Interacts with serum response factor (SRF). Component of a large complex containing histone deacetylases such as HDAC2. Interacts with the acetylated forms of HSPA1A and HSPA1B. Interacts with HSPA8.

Its subcellular location is the nucleus. The protein resides in the cytoplasm. Its function is as follows. Atypical homeodomain protein which does not bind DNA and is required to modulate cardiac growth and development. Acts via its interaction with SRF, thereby modulating the expression of SRF-dependent cardiac-specific genes and cardiac development. Prevents SRF-dependent transcription either by inhibiting SRF binding to DNA or by recruiting histone deacetylase (HDAC) proteins that prevent transcription by SRF. Overexpression causes cardiac hypertrophy. Acts as a co-chaperone for HSPA1A and HSPA1B chaperone proteins and assists in chaperone-mediated protein refolding. The chain is Homeodomain-only protein (HOPX) from Sus scrofa (Pig).